A 302-amino-acid chain; its full sequence is Putative S-adenosyl-L-methionine-dependent methyltransferase MAB_4586c (302 aa).

S-adenosyl-L-methionine contacts are provided by residues Asp122 and 151-152; that span reads DL.

Belongs to the UPF0677 family.

Its function is as follows. Exhibits S-adenosyl-L-methionine-dependent methyltransferase activity. This Mycobacteroides abscessus (strain ATCC 19977 / DSM 44196 / CCUG 20993 / CIP 104536 / JCM 13569 / NCTC 13031 / TMC 1543 / L948) (Mycobacterium abscessus) protein is Putative S-adenosyl-L-methionine-dependent methyltransferase MAB_4586c.